Consider the following 193-residue polypeptide: General stress protein 16U (193 aa).

The protein belongs to the CAPAB/TerDEXZ family.

This is General stress protein 16U (yceD) from Bacillus subtilis (strain 168).